The following is a 706-amino-acid chain: Probable rhamnogalacturonate lyase B (706 aa).

The N-terminal stretch at 1-19 (MRLLHPLIPASLLLTLTSA) is a signal peptide. N-linked (GlcNAc...) asparagine glycosylation is found at asparagine 27, asparagine 40, asparagine 143, asparagine 239, asparagine 285, asparagine 380, asparagine 495, asparagine 569, asparagine 597, and asparagine 638.

It belongs to the polysaccharide lyase 4 family.

Its subcellular location is the secreted. The enzyme catalyses Endotype eliminative cleavage of L-alpha-rhamnopyranosyl-(1-&gt;4)-alpha-D-galactopyranosyluronic acid bonds of rhamnogalacturonan I domains in ramified hairy regions of pectin leaving L-rhamnopyranose at the reducing end and 4-deoxy-4,5-unsaturated D-galactopyranosyluronic acid at the non-reducing end.. Functionally, pectinolytic enzymes consist of four classes of enzymes: pectin lyase, polygalacturonase, pectin methylesterase and rhamnogalacturonase. Degrades the rhamnogalacturonan I (RG-I) backbone of pectin. This chain is Probable rhamnogalacturonate lyase B (rglB), found in Aspergillus niger (strain ATCC MYA-4892 / CBS 513.88 / FGSC A1513).